The chain runs to 398 residues: Protein-glutamate methylesterase/protein-glutamine glutaminase (398 aa).

One can recognise a Response regulatory domain in the interval 4–121 (KVLVVDDSSF…ATNKDDAILL (118 aa)). The residue at position 55 (D55) is a 4-aspartylphosphate. A disordered region spans residues 133-200 (RMYRSSSLTP…SANPTTSSIS (68 aa)). Polar residues-rich tracts occupy residues 136–146 (RSSSLTPTSTI) and 168–200 (RLAS…SSIS). Residues 205–398 (SGKQYKLLLI…EAILKESSRG (194 aa)) form the CheB-type methylesterase domain. Catalysis depends on residues S217, H244, and D340.

It belongs to the CheB family. Phosphorylated by CheA. Phosphorylation of the N-terminal regulatory domain activates the methylesterase activity.

It is found in the cytoplasm. It carries out the reaction [protein]-L-glutamate 5-O-methyl ester + H2O = L-glutamyl-[protein] + methanol + H(+). The enzyme catalyses L-glutaminyl-[protein] + H2O = L-glutamyl-[protein] + NH4(+). Its function is as follows. Involved in chemotaxis. Part of a chemotaxis signal transduction system that modulates chemotaxis in response to various stimuli. Catalyzes the demethylation of specific methylglutamate residues introduced into the chemoreceptors (methyl-accepting chemotaxis proteins or MCP) by CheR. Also mediates the irreversible deamidation of specific glutamine residues to glutamic acid. The protein is Protein-glutamate methylesterase/protein-glutamine glutaminase of Shewanella frigidimarina (strain NCIMB 400).